Reading from the N-terminus, the 111-residue chain is Large ribosomal subunit protein eL42 (111 aa).

Zn(2+) contacts are provided by Cys12, Cys15, Cys72, and Cys77.

The protein belongs to the eukaryotic ribosomal protein eL42 family. In terms of assembly, component of the large ribosomal subunit.

It localises to the cytoplasm. Component of the large ribosomal subunit. The ribosome is a large ribonucleoprotein complex responsible for the synthesis of proteins in the cell. This is Large ribosomal subunit protein eL42 (RPL36A) from Oryctolagus cuniculus (Rabbit).